A 689-amino-acid chain; its full sequence is Quinidine resistance protein 3 (689 aa).

Polar residues predominate over residues 1-24 (MQAQGSQSNVGSLRSNCSDNSLPN). Residues 1-73 (MQAQGSQSNV…DNQLSRLKSE (73 aa)) are disordered. At 1–108 (MQAQGSQSNV…RDYPPMMKKM (108 aa)) the chain is on the extracellular side. 2 stretches are compositionally biased toward basic and acidic residues: residues 29–51 (MHCD…EKTN) and 59–73 (SREH…LKSE). A helical transmembrane segment spans residues 109–131 (IVFLIAFSSMMGPMGTSIIFPAI). Residues 132–139 (NSITTEFK) lie on the Cytoplasmic side of the membrane. A helical transmembrane segment spans residues 140 to 163 (TSVIMVNVSIGVYLLSLGVFPLWW). Residues 164–175 (SSLSELEGRRTT) lie on the Extracellular side of the membrane. The helical transmembrane segment at 176–193 (YITSFALLFAFNIGSALA) threads the bilayer. The Cytoplasmic segment spans residues 194 to 235 (PDINSFIALRMLCGAASASVQSVGAGTVADLYISEDRGKNLS). The helical transmembrane segment at 236–256 (YYYLGPLLAPLLSPIFGSLLV) threads the bilayer. The Extracellular segment spans residues 257-265 (NRWPWRSTQ). The helical transmembrane segment at 266–283 (WFMVILSGCNVILLTVLL) threads the bilayer. At 284 to 475 (PETLRKQDSK…KSLHFLEYPP (192 aa)) the chain is on the cytoplasmic side. The residue at position 436 (Ser436) is a Phosphoserine. The helical transmembrane segment at 476–493 (VALAITFSAISFSTVYFV) threads the bilayer. The Extracellular portion of the chain corresponds to 494–510 (NMTVEYKYSRPPYNFKP). The helical transmembrane segment at 511–532 (LYIGLLYIPNSVTYFFASIYGG) threads the bilayer. At 533–558 (RWVDMLLKRYKEKYGILAPEARISWN) the chain is on the cytoplasmic side. The chain crosses the membrane as a helical span at residues 559 to 577 (VVTSVISFPIALLIFGWCL). Residues 578 to 586 (DKKCHWVTP) lie on the Extracellular side of the membrane. A helical membrane pass occupies residues 587–609 (LIGTALFGYAAMMTIGATLSYLV). At 610-624 (DSLPGKGATGVALNN) the chain is on the cytoplasmic side. The helical transmembrane segment at 625–642 (LIRQILAATAVFVTTPML) threads the bilayer. Residues 643–648 (NGMGTG) are Extracellular-facing. Residues 649–668 (WAFTMLAFIVLGASSVLIIL) traverse the membrane as a helical segment. The Cytoplasmic segment spans residues 669 to 689 (KKHGDYWRENYDLQKLYDKID).

Belongs to the major facilitator superfamily. CAR1 family.

The protein resides in the cell membrane. Functionally, multidrug resistance transporter involved in resistance and adaptation to quinidine and to the herbicide barban (4-chloro-2-butynyl [3-chlorophenyl] carbamate). This Saccharomyces cerevisiae (strain ATCC 204508 / S288c) (Baker's yeast) protein is Quinidine resistance protein 3 (QDR3).